We begin with the raw amino-acid sequence, 196 residues long: Lipoprotein signal peptidase (196 aa).

2 helical membrane passes run I75–S95 and T97–D117. Residues D126 and D144 contribute to the active site. Residues Y135 to V155 form a helical membrane-spanning segment.

It belongs to the peptidase A8 family.

The protein resides in the cell inner membrane. The catalysed reaction is Release of signal peptides from bacterial membrane prolipoproteins. Hydrolyzes -Xaa-Yaa-Zaa-|-(S,diacylglyceryl)Cys-, in which Xaa is hydrophobic (preferably Leu), and Yaa (Ala or Ser) and Zaa (Gly or Ala) have small, neutral side chains.. Its pathway is protein modification; lipoprotein biosynthesis (signal peptide cleavage). Functionally, this protein specifically catalyzes the removal of signal peptides from prolipoproteins. The sequence is that of Lipoprotein signal peptidase from Rickettsia bellii (strain OSU 85-389).